A 575-amino-acid chain; its full sequence is Acyloxyacyl hydrolase (575 aa).

An N-terminal signal peptide occupies residues 1–25 (MKSPWRILVVSPLLLLPLHSSTSRA). The propeptide occupies 26–34 (HDNQPGTIR). The Saposin B-type domain maps to 36–117 (DHYTCVGCVL…HTLEFCKQEP (82 aa)). An important for enzyme activity, localization to cytoplasmic vesicles, and protein stability region spans residues 37–69 (HYTCVGCVLVVSVIEQLAQVHNSTVQASMERLC). 8 cysteine pairs are disulfide-bonded: Cys-40-Cys-113, Cys-43-Cys-107, Cys-69-Cys-82, Cys-122-Cys-453, Cys-159-Cys-168, Cys-205-Cys-229, Cys-248-Cys-328, and Cys-375-Cys-459. N-linked (GlcNAc...) asparagine glycosylation occurs at Asn-58. A lipopolysaccharide binding region spans residues 172–176 (KLAIK). 15 residues coordinate Ca(2+): Asp-183, Asp-185, Asp-187, Tyr-189, Asp-204, Asn-206, Asp-207, Asp-209, Val-212, Asp-222, Asp-226, Asn-228, Asn-230, Ile-232, and Glu-244. Asn-206 is a glycosylation site (N-linked (GlcNAc...) asparagine). Ser-262 is a catalytic residue. A glycan (N-linked (GlcNAc...) asparagine) is linked at Asn-466.

In terms of assembly, heterodimer of the large and small subunits; disulfide-linked. The cofactor is Ca(2+). In terms of processing, cleaved into a large and a small subunit. Post-translationally, the small subunit is N-glycosylated.

It localises to the secreted. The protein localises to the cytoplasmic vesicle. The catalysed reaction is a 3-(acyloxy)acyl derivative of bacterial toxin + H2O = a 3-hydroxyacyl derivative of bacterial toxin + a fatty acid + H(+). Removes the secondary (acyloxyacyl-linked) fatty acyl chains from the lipid A region of bacterial lipopolysaccharides (LPS). By breaking down LPS, terminates the host response to bacterial infection and prevents prolonged and damaging inflammatory responses. In peritoneal macrophages, seems to be important for recovery from a state of immune tolerance following infection by Gram-negative bacteria. The polypeptide is Acyloxyacyl hydrolase (Oryctolagus cuniculus (Rabbit)).